The sequence spans 308 residues: Homoserine kinase (308 aa).

Residue 95 to 105 coordinates ATP; that stretch reads PQSRGLGSSAA.

It belongs to the GHMP kinase family. Homoserine kinase subfamily.

The protein resides in the cytoplasm. It catalyses the reaction L-homoserine + ATP = O-phospho-L-homoserine + ADP + H(+). It functions in the pathway amino-acid biosynthesis; L-threonine biosynthesis; L-threonine from L-aspartate: step 4/5. In terms of biological role, catalyzes the ATP-dependent phosphorylation of L-homoserine to L-homoserine phosphate. In Corynebacterium jeikeium (strain K411), this protein is Homoserine kinase.